A 2280-amino-acid polypeptide reads, in one-letter code: Protein Ycf2 (2280 aa).

1634 to 1641 (GSIGTGRS) lines the ATP pocket.

It belongs to the Ycf2 family.

The protein resides in the plastid. It localises to the chloroplast stroma. Probable ATPase of unknown function. Its presence in a non-photosynthetic plant (Epifagus virginiana) and experiments in tobacco indicate that it has an essential function which is probably not related to photosynthesis. This chain is Protein Ycf2, found in Eucalyptus globulus subsp. globulus (Tasmanian blue gum).